The primary structure comprises 579 residues: Transcription factor MTB2 (579 aa).

The interval 373-439 (GGMQIDFTNS…PLNHVEAERQ (67 aa)) is disordered. Residues 382-392 (SRPVVSPVPTV) show a composition bias toward low complexity. 2 stretches are compositionally biased toward basic and acidic residues: residues 393–415 (ESEH…DERR) and 425–439 (NGRE…AERQ). Residues 428-441 (EEPLNHVEAERQRR) are basic motif; degenerate. Positions 428–477 (EEPLNHVEAERQRREKLNQRFYALRAVVPNISKMDKASLLGDAIAHITDM) constitute a bHLH domain. The segment at 442 to 477 (EKLNQRFYALRAVVPNISKMDKASLLGDAIAHITDM) is helix-loop-helix motif.

The protein localises to the nucleus. Functionally, transcription factor that negatively regulates jasmonate (JA) signaling. Negatively regulates JA-dependent response to wounding, JA-induced expression of defense genes, JA-dependent responses against herbivorous insects, and JA-dependent resistance against Botrytis cinerea infection. Plays a positive role in resistance against the bacterial pathogen Pseudomonas syringae pv tomato DC3000. The polypeptide is Transcription factor MTB2 (Solanum lycopersicum (Tomato)).